A 389-amino-acid chain; its full sequence is (2R)-sulfolactate sulfo-lyase subunit beta (389 aa).

Belongs to the UxaA family. In terms of assembly, (2R)-sulfolactate sulfo-lyase is composed of a SuyA and a SuyB subunit.

The protein resides in the cytoplasm. It carries out the reaction (2R)-3-sulfolactate = sulfite + pyruvate + H(+). Functionally, together with SuyA, desulfonates sulfolactate to pyruvate and sulfite. The polypeptide is (2R)-sulfolactate sulfo-lyase subunit beta (suyB) (Chromohalobacter salexigens (strain ATCC BAA-138 / DSM 3043 / CIP 106854 / NCIMB 13768 / 1H11)).